A 328-amino-acid chain; its full sequence is MPLHHLTRFPRLELIGAPTPLEYLPRLSDYLGREIYIKRDDVTPIAMGGNKLRKLEFLVADALREGADTLITAGAIQSNHVRQTAAVAAKLGLHCVALLENPIGTTAENYLTNGNRLLLDLFNTQIEMCDALTDPDAQLQTLATRIEAQGFRPYVIPVGGSSALGAMGYVESALEIAQQCEEVVGLSSVVVASGSAGTHAGLAVGLEHLMPDVELIGVTVSRAVAEQKPKVIALQQAIAGQLALTATADIHLWDDYFAPGYGVPNDAGMEAVKLLASLEGVLLDPVYTGKAMAGLIDGISQKRFNDDGPILFIHTGGAPALFAYHPHV.

N6-(pyridoxal phosphate)lysine is present on Lys-51.

It belongs to the ACC deaminase/D-cysteine desulfhydrase family. In terms of assembly, homodimer. Pyridoxal 5'-phosphate serves as cofactor.

It catalyses the reaction D-cysteine + H2O = hydrogen sulfide + pyruvate + NH4(+) + H(+). In terms of biological role, catalyzes the alpha,beta-elimination reaction of D-cysteine and of several D-cysteine derivatives. It could be a defense mechanism against D-cysteine. The polypeptide is D-cysteine desulfhydrase (Salmonella schwarzengrund (strain CVM19633)).